The primary structure comprises 1391 residues: DNA-directed RNA polymerase subunit beta (1391 aa).

Belongs to the RNA polymerase beta chain family. The RNAP catalytic core consists of 2 alpha, 1 beta, 1 beta' and 1 omega subunit. When a sigma factor is associated with the core the holoenzyme is formed, which can initiate transcription.

It catalyses the reaction RNA(n) + a ribonucleoside 5'-triphosphate = RNA(n+1) + diphosphate. Functionally, DNA-dependent RNA polymerase catalyzes the transcription of DNA into RNA using the four ribonucleoside triphosphates as substrates. The chain is DNA-directed RNA polymerase subunit beta from Mycoplasma pneumoniae (strain ATCC 29342 / M129 / Subtype 1) (Mycoplasmoides pneumoniae).